The sequence spans 118 residues: Ribonuclease P protein component (118 aa).

It belongs to the RnpA family. As to quaternary structure, consists of a catalytic RNA component (M1 or rnpB) and a protein subunit.

It catalyses the reaction Endonucleolytic cleavage of RNA, removing 5'-extranucleotides from tRNA precursor.. In terms of biological role, RNaseP catalyzes the removal of the 5'-leader sequence from pre-tRNA to produce the mature 5'-terminus. It can also cleave other RNA substrates such as 4.5S RNA. The protein component plays an auxiliary but essential role in vivo by binding to the 5'-leader sequence and broadening the substrate specificity of the ribozyme. The sequence is that of Ribonuclease P protein component from Shewanella frigidimarina (strain NCIMB 400).